The following is a 90-amino-acid chain: UPF0184 protein (90 aa).

A coiled-coil region spans residues 16 to 78 (DETKEEMVEL…QSLETEQNTE (63 aa)). Residues 57 to 90 (SQQARQELQAERQSLETEQNTEPSTKSDQEQKKQ) form a disordered region. A compositionally biased stretch (basic and acidic residues) spans 81 to 90 (TKSDQEQKKQ).

Belongs to the UPF0184 (EST00098) family.

The chain is UPF0184 protein from Branchiostoma floridae (Florida lancelet).